An 809-amino-acid polypeptide reads, in one-letter code: Lon protease (809 aa).

The region spanning 42-242 (LVIYPLGGRP…KVLTLLKKEL (201 aa)) is the Lon N-terminal domain. 395–402 (GPPGVGKT) is a binding site for ATP. One can recognise a Lon proteolytic domain in the interval 629 to 809 (LTGVGIVTGL…YAEVAKLVFG (181 aa)). Active-site residues include Ser-716 and Lys-759.

Belongs to the peptidase S16 family. Homohexamer. Organized in a ring with a central cavity.

Its subcellular location is the cytoplasm. The catalysed reaction is Hydrolysis of proteins in presence of ATP.. Its function is as follows. ATP-dependent serine protease that mediates the selective degradation of mutant and abnormal proteins as well as certain short-lived regulatory proteins. Required for cellular homeostasis and for survival from DNA damage and developmental changes induced by stress. Degrades polypeptides processively to yield small peptide fragments that are 5 to 10 amino acids long. Binds to DNA in a double-stranded, site-specific manner. The chain is Lon protease from Magnetococcus marinus (strain ATCC BAA-1437 / JCM 17883 / MC-1).